The chain runs to 171 residues: Peptide methionine sulfoxide reductase MsrA (171 aa).

Cys-12 is a catalytic residue.

Belongs to the MsrA Met sulfoxide reductase family.

It carries out the reaction L-methionyl-[protein] + [thioredoxin]-disulfide + H2O = L-methionyl-(S)-S-oxide-[protein] + [thioredoxin]-dithiol. It catalyses the reaction [thioredoxin]-disulfide + L-methionine + H2O = L-methionine (S)-S-oxide + [thioredoxin]-dithiol. In terms of biological role, has an important function as a repair enzyme for proteins that have been inactivated by oxidation. Catalyzes the reversible oxidation-reduction of methionine sulfoxide in proteins to methionine. The protein is Peptide methionine sulfoxide reductase MsrA of Leuconostoc mesenteroides subsp. mesenteroides (strain ATCC 8293 / DSM 20343 / BCRC 11652 / CCM 1803 / JCM 6124 / NCDO 523 / NBRC 100496 / NCIMB 8023 / NCTC 12954 / NRRL B-1118 / 37Y).